We begin with the raw amino-acid sequence, 91 residues long: Virion membrane protein A14 homolog (91 aa).

The Intravirion segment spans residues 1–12; sequence MDPLGFFRNRPS. A helical transmembrane segment spans residues 13–33; that stretch reads YVVVFGIILLIVACICAYIEL. Residues 34 to 46 lie on the Virion surface side of the membrane; sequence SKSGKPADSALRS. The helical transmembrane segment at 47–67 threads the bilayer; sequence ISIISFILAILLLLGIILFSG. The Intravirion segment spans residues 68–91; that stretch reads YNRYCTGNVVDESRYATSPGTEIQ.

The protein belongs to the chordopoxvirinae A14 family. Homodimer; disulfide-linked. Interacts with A17. In terms of processing, phosphorylated by viral F10 kinase, phosphorylation state is regulated by H1 phosphatase.

The protein resides in the virion membrane. In terms of biological role, envelope protein which is a major component of the mature virion (MV) membrane. Essential for membrane biogenesis. Is required, together with A17, to form bona fide crescents, which can progress to form the immature virion (IV) membrane. A14 and A17 form a lattice that is stabilized by disulfide bonds and serves as an anchor within the viral membrane to which several other proteins important in virion structure and morphogenesis attach. This is Virion membrane protein A14 homolog from Fowlpox virus (strain NVSL) (FPV).